We begin with the raw amino-acid sequence, 977 residues long: Mineralocorticoid receptor (977 aa).

The segment covering 1–19 (METKGYHSRPEGLDMERRW) has biased composition (basic and acidic residues). Disordered regions lie at residues 1–37 (METKGYHSRPEGLDMERRWGQVSQPVDRPSLGPAERT) and 231–288 (QGTP…VSSP). Residues 1–601 (METKGYHSRP…STGSSRPSKI (601 aa)) are modulating. The segment covering 231 to 243 (QGTPLTCSPTVDN) has biased composition (polar residues). Phosphoserine is present on residues serine 250, serine 259, serine 283, serine 287, and serine 299. Residues 259–288 (SPLSSPLSSMKSPISSPPSHCSVKSPVSSP) show a composition bias toward low complexity. Disordered stretches follow at residues 305-327 (NSRCSVSSPSKANNRSTLSSPAA) and 344-368 (SGASVGSSATRDVIPSPDTHEKGAH). Zn(2+) contacts are provided by cysteine 602, cysteine 605, cysteine 619, cysteine 622, cysteine 638, cysteine 644, cysteine 654, and cysteine 657. NR C4-type zinc fingers lie at residues 602-622 (CLVCGDGASGCHYGVVTCGSC) and 638-662 (CAGRNDCIIDKIRRKNCPACRLQKC). Positions 602 to 667 (CLVCGDGASG…RLQKCLQAGM (66 aa)) form a DNA-binding region, nuclear receptor. A hinge region spans residues 668-718 (NLGARKSKKLGKLKGLHEEQPQQPPPPQSPEEGTTYIAPAKEPSVNTALVP). The tract at residues 682 to 703 (GLHEEQPQQPPPPQSPEEGTTY) is disordered. The NR LBD domain occupies 719 to 957 (QLSSISRALT…EFPAMLVEII (239 aa)). 21-hydroxyprogesterone-binding residues include asparagine 763 and glutamine 769. Residues asparagine 763 and glutamine 769 each coordinate aldosterone. Residues asparagine 763 and glutamine 769 each contribute to the progesterone site. Residues 775 to 778 (KWAK) are important for coactivator binding. 21-hydroxyprogesterone contacts are provided by arginine 810 and threonine 938. Aldosterone is bound by residues arginine 810 and threonine 938. Positions 810 and 938 each coordinate progesterone.

Belongs to the nuclear hormone receptor family. NR3 subfamily.

Its subcellular location is the cytoplasm. The protein localises to the nucleus. Functionally, receptor for both mineralocorticoids (MC) such as aldosterone and glucocorticoids (GC) such as corticosterone or cortisol. Binds to mineralocorticoid response elements (MRE) and transactivates target genes. The effect of MC is to increase ion and water transport and thus raise extracellular fluid volume and blood pressure and lower potassium levels. The polypeptide is Mineralocorticoid receptor (NR3C2) (Tupaia belangeri (Common tree shrew)).